Reading from the N-terminus, the 176-residue chain is Large ribosomal subunit protein uL10 (176 aa).

It belongs to the universal ribosomal protein uL10 family. As to quaternary structure, part of the ribosomal stalk of the 50S ribosomal subunit. The N-terminus interacts with L11 and the large rRNA to form the base of the stalk. The C-terminus forms an elongated spine to which L12 dimers bind in a sequential fashion forming a multimeric L10(L12)X complex.

Its function is as follows. Forms part of the ribosomal stalk, playing a central role in the interaction of the ribosome with GTP-bound translation factors. This is Large ribosomal subunit protein uL10 from Acaryochloris marina (strain MBIC 11017).